The sequence spans 267 residues: Diphthine--ammonia ligase (267 aa).

Tyr97 carries the post-translational modification Phosphotyrosine.

Belongs to the Diphthine--ammonia ligase family.

It catalyses the reaction diphthine-[translation elongation factor 2] + NH4(+) + ATP = diphthamide-[translation elongation factor 2] + AMP + diphosphate + H(+). The protein operates within protein modification; peptidyl-diphthamide biosynthesis. Amidase that catalyzes the last step of diphthamide biosynthesis using ammonium and ATP. Diphthamide biosynthesis consists in the conversion of an L-histidine residue in the translation elongation factor eEF-2 (EEF2) to diphthamide. The sequence is that of Diphthine--ammonia ligase (Dph6) from Rattus norvegicus (Rat).